Consider the following 531-residue polypeptide: UDP-glucuronosyltransferase 1A7 (531 aa).

Residues 1 to 25 form the signal peptide; sequence MAPADFPASLPLCVCLLLASGLAQA. N-linked (GlcNAc...) asparagine glycans are attached at residues Asn293 and Asn431. A helical transmembrane segment spans residues 489–509; the sequence is VIGFLLAIVLTVVFIVFKCCA.

It belongs to the UDP-glycosyltransferase family. Homodimer. Homooligomer. Interacts with UGT1A1, UGT1A3, UGT1A4, UGT1A6, UGT1A8, UGT1A9 and UGT1A10 to form heterodimers. As to expression, widely expressed with highest levels detected in colon and kidney.

The protein resides in the endoplasmic reticulum membrane. It catalyses the reaction glucuronate acceptor + UDP-alpha-D-glucuronate = acceptor beta-D-glucuronoside + UDP + H(+). The enzyme catalyses 17alpha-estradiol + UDP-alpha-D-glucuronate = 17alpha-estradiol 3-O-(beta-D-glucuronate) + UDP + H(+). It carries out the reaction prunetin + UDP-alpha-D-glucuronate = prunetin-5-O-beta-D-glucuronide + UDP. The catalysed reaction is 5-epi-5-F2t-IsoP + UDP-alpha-D-glucuronate = 5-epi-5-F2t-IsoP-glucuronide + UDP + H(+). It catalyses the reaction (E)-ferulate + UDP-alpha-D-glucuronate = (E)-ferulic acid beta-D-glucuronate ester + UDP. The enzyme catalyses candesartan + UDP-alpha-D-glucuronate = candesartan O-beta-D-glucuronoside + UDP. It carries out the reaction SN-38 + UDP-alpha-D-glucuronate = SN-38 O-beta-D-glucuronide + UDP + H(+). The catalysed reaction is mycophenolate + UDP-alpha-D-glucuronate = mycophenolate 7-O-beta-D-glucuronide + UDP + H(+). Functionally, UDP-glucuronosyltransferase (UGT) that catalyzes phase II biotransformation reactions in which lipophilic substrates are conjugated with glucuronic acid to increase the metabolite's water solubility, thereby facilitating excretion into either the urine or bile. Essential for the elimination and detoxification of drugs, xenobiotics and endogenous compounds. Catalyzes the glucuronidation of endogenous estrogen hormone epiestradiol. Involved in the glucuronidation of F2-isoprostane (5-epi-5-F2t-IsoP). Involved in the glucuronidation of the phytochemical ferulic acid at the carboxylic acid group. Also catalyzes the glucuronidation of the isoflavones genistein, daidzein, glycitein, formononetin, biochanin A and prunetin, which are phytoestrogens with anticancer and cardiovascular properties. Involved in the glucuronidation of the AGTR1 angiotensin receptor antagonist caderastan, a drug which can inhibit the effect of angiotensin II. Involved in the biotransformation of 7-ethyl-10-hydroxycamptothecin (SN-38), the pharmacologically active metabolite of the anticancer drug irinotecan. Also metabolizes mycophenolate, an immunosuppressive agent. The sequence is that of UDP-glucuronosyltransferase 1A7 from Mus musculus (Mouse).